The primary structure comprises 323 residues: Melanocortin receptor 3 (323 aa).

Residues 1 to 37 (MNSSCCPSSSYPTLPNLSQHPAAPSASNRSGSGFCEQ) lie on the Extracellular side of the membrane. N-linked (GlcNAc...) asparagine glycosylation is found at Asn2, Asn16, and Asn28. The helical transmembrane segment at 38 to 63 (VFIKPEVFLALGIVSLMENILVILAV) threads the bilayer. Topologically, residues 64 to 75 (VRNGNLHSPMYF) are cytoplasmic. Residues 76-100 (FLCSLAAADMLVSLSNSLETIMIVV) form a helical membrane-spanning segment. Residues 101 to 118 (INSDSLTLEDQFIQHMDN) are Extracellular-facing. Residues 119–140 (IFDSMICISLVASICNLLAIAV) form a helical membrane-spanning segment. At 141–160 (DRYVTIFYALRYHSIMTVRK) the chain is on the cytoplasmic side. The chain crosses the membrane as a helical span at residues 161 to 181 (ALSLIVAIWVCCGICGVMFIV). The Extracellular portion of the chain corresponds to 182-186 (YSESK). A helical membrane pass occupies residues 187 to 210 (MVIVCLITMFFAMVLLMGTLYIHM). Topologically, residues 211 to 245 (FLFARLHVQRIAALPPADGVAPQQHSCMKGAVTIT) are cytoplasmic. Residues 246 to 268 (ILLGVFIFCWAPFFLHLVLIITC) traverse the membrane as a helical segment. The Extracellular portion of the chain corresponds to 269–277 (PTNPYCICY). The chain crosses the membrane as a helical span at residues 278 to 301 (TAHFNTYLVLIMCNSVIDPLIYAF). Topologically, residues 302–323 (RSLELRNTFKEILCGCNGMNVG) are cytoplasmic. A lipid anchor (S-palmitoyl cysteine) is attached at Cys315.

Belongs to the G-protein coupled receptor 1 family. Brain.

It localises to the cell membrane. Its function is as follows. Receptor for MSH (alpha, beta and gamma) and ACTH. This receptor is mediated by G proteins which activate adenylate cyclase. Required for expression of anticipatory patterns of activity and wakefulness during periods of limited nutrient availability and for the normal regulation of circadian clock activity in the brain. This Rattus norvegicus (Rat) protein is Melanocortin receptor 3 (Mc3r).